The following is a 2062-amino-acid chain: Ankyrin repeat domain-containing protein 12 (2062 aa).

2 disordered regions span residues 1 to 119 (MPKS…GNKK) and 145 to 188 (ARDN…GETP). Residues 9 to 20 (PIQSENSDSDSN) are compositionally biased toward polar residues. 2 stretches are compositionally biased toward basic and acidic residues: residues 41 to 57 (PKIERSDVSKEMKEKSS) and 100 to 117 (YSEKEGPEKKKTKKEAGN). Residues 145 to 172 (ARDNSPDSTPNHPSQTTPAQKKTPSSSS) are compositionally biased toward polar residues. Phosphoserine is present on Ser-149. Basic and acidic residues predominate over residues 173–187 (RQKDKVNKRNERGET). 3 ANK repeats span residues 184–213 (RGETPLHMAAIRGDVKQVKELISLGANVNV), 217–246 (AGWTPLHEACNVGYYDVAKILIAAGADVNT), and 250–280 (DDDTPLHDSASSGHRDIVKLLLRHGGNPFQA). Disordered stretches follow at residues 301–338 (KREVPLSDDDESYTDSEEAQSVNPSSVDENIDSETEKD), 409–501 (KSFK…TRIT), 538–577 (ISTGKSPKHSCGLSEKQSTPLKQEHTKTCLSPGSSEMSLQ), 609–683 (QKDF…DSAK), 727–788 (EKNI…FTSL), 812–1073 (EKHI…LVND), 1097–1227 (KHKE…RPPV), and 1328–1350 (EESNQGSLLTVPGDTSPSPKPEV). Acidic residues predominate over residues 306-318 (LSDDDESYTDSEE). Composition is skewed to polar residues over residues 319 to 328 (AQSVNPSSVD) and 437 to 454 (KKISTSCSVIPETSNSDM). The segment covering 455–467 (QTKKEYVVSGEHK) has biased composition (basic and acidic residues). Positions 468 to 480 (QKGKVKRKLKNQN) are enriched in basic residues. The span at 481 to 498 (KNKENQELKQEKEGKENT) shows a compositional bias: basic and acidic residues. Ser-543 bears the Phosphoserine mark. The span at 565 to 575 (TCLSPGSSEMS) shows a compositional bias: polar residues. Basic and acidic residues-rich tracts occupy residues 609-631 (QKDFHLEFGEKSNAKIKDEDHSP), 639-649 (TLKKMDKEGKT), 658-683 (KEREKEKHKKEIEGEKEKYKTKDSAK), 727-784 (EKNI…KDSE), 812-969 (EKHI…DKES), 977-1037 (HIQE…KDKI), 1061-1072 (KDTRPKEKRLVN), and 1103-1157 (KQKE…KQPK). Ser-630 bears the Phosphoserine mark. Position 861 is a phosphoserine (Ser-861). A compositionally biased stretch (polar residues) spans 1161 to 1189 (SNRSQSVDTKNVMTLGKSSFVSDNSLNRS). The segment covering 1200–1213 (SSRSVSMISVASSE) has biased composition (low complexity). The span at 1328–1344 (EESNQGSLLTVPGDTSP) shows a compositional bias: polar residues. At Ser-1401 the chain carries Phosphoserine. Disordered regions lie at residues 1721–1744 (NAEDDKTENQIPQRMTRNKANTMA) and 1756–1795 (LLSEKDSESSSPRGRIRLTEDDDPQIHHPRKRKVSRVPQP). The segment covering 1729-1744 (NQIPQRMTRNKANTMA) has biased composition (polar residues).

In terms of assembly, interacts with the PAS region of the p160 coactivators.

The protein resides in the nucleus. Its function is as follows. May recruit HDACs to the p160 coactivators/nuclear receptor complex to inhibit ligand-dependent transactivation. This chain is Ankyrin repeat domain-containing protein 12 (ANKRD12), found in Homo sapiens (Human).